Reading from the N-terminus, the 277-residue chain is Carbonyl reductase [NADPH] 1 (277 aa).

An N-acetylserine modification is found at Ser-2. Phosphoserine is present on residues Ser-2 and Ser-30. NADP(+)-binding positions include 10–34 (VTGANKGIGFVIVRDLCRRFSGDVV), 63–64 (DI), and Asn-90. Glutathione is bound by residues 95-97 (FKT) and Gln-106. Ser-140 serves as a coordination point for substrate. Residue 193–194 (AY) coordinates glutathione. The Proton acceptor role is filled by Tyr-194. NADP(+) is bound by residues 194–198 (YGVTK) and 231–233 (VRT). Lys-239 is subject to N6-1-carboxyethyl lysine.

This sequence belongs to the short-chain dehydrogenases/reductases (SDR) family. Monomer.

The protein resides in the cytoplasm. It catalyses the reaction a secondary alcohol + NADP(+) = a ketone + NADPH + H(+). The catalysed reaction is prostaglandin F2alpha + NADP(+) = prostaglandin E2 + NADPH + H(+). It carries out the reaction prostaglandin E1 + NADP(+) = 15-oxoprostaglandin E1 + NADPH + H(+). The enzyme catalyses menadione + NADPH + H(+) = menadiol + NADP(+). It catalyses the reaction prostaglandin D2 + NADP(+) = 15-oxoprostaglandin D2 + NADPH + H(+). The catalysed reaction is prostaglandin E2 + NADP(+) = 15-oxoprostaglandin E2 + NADPH + H(+). It carries out the reaction prostaglandin F2alpha + NADP(+) = 15-oxoprostaglandin F2alpha + NADPH + H(+). The enzyme catalyses daunorubicin + NADPH + H(+) = 13-dihydrodaunorubicin + NADP(+). It catalyses the reaction S-nitrosoglutathione + NADPH + H(+) = S-(hydroxysulfenamide)glutathione + NADP(+). The catalysed reaction is a primary alcohol + NADP(+) = an aldehyde + NADPH + H(+). It carries out the reaction cortisol + NADPH + H(+) = 20beta-dihydrocortisol + NADP(+). The enzyme catalyses corticosterone + NADPH + H(+) = 20beta-dihydrocorticosterone + NADP(+). Functionally, NADPH-dependent reductase with broad substrate specificity. Catalyzes the reduction of a wide variety of carbonyl compounds including quinones, prostaglandins, menadione, plus various xenobiotics. Catalyzes the reduction of the antitumor anthracyclines doxorubicin and daunorubicin to the cardiotoxic compounds doxorubicinol and daunorubicinol. Can convert prostaglandin E to prostaglandin F2-alpha. Can bind glutathione, which explains its higher affinity for glutathione-conjugated substrates. Catalyzes the reduction of S-nitrosoglutathione. In addition, participates in the glucocorticoid metabolism by catalyzing the NADPH-dependent cortisol/corticosterone into 20beta-dihydrocortisol (20b-DHF) or 20beta-corticosterone (20b-DHB), which are weak agonists of NR3C1 and NR3C2 in adipose tissue. The chain is Carbonyl reductase [NADPH] 1 from Bos taurus (Bovine).